Consider the following 197-residue polypeptide: Peptide deformylase (197 aa).

Residues Cys-106 and His-148 each contribute to the Fe cation site. Residue Glu-149 is part of the active site. His-152 contacts Fe cation.

It belongs to the polypeptide deformylase family. It depends on Fe(2+) as a cofactor.

The catalysed reaction is N-terminal N-formyl-L-methionyl-[peptide] + H2O = N-terminal L-methionyl-[peptide] + formate. Removes the formyl group from the N-terminal Met of newly synthesized proteins. Requires at least a dipeptide for an efficient rate of reaction. N-terminal L-methionine is a prerequisite for activity but the enzyme has broad specificity at other positions. The polypeptide is Peptide deformylase (Mycobacteroides abscessus (strain ATCC 19977 / DSM 44196 / CCUG 20993 / CIP 104536 / JCM 13569 / NCTC 13031 / TMC 1543 / L948) (Mycobacterium abscessus)).